The chain runs to 295 residues: UDP-N-acetylenolpyruvoylglucosamine reductase (295 aa).

Positions 23–188 (KVGGPADFLA…ISAKFALKPG (166 aa)) constitute an FAD-binding PCMH-type domain. Arg-167 is a catalytic residue. Ser-217 acts as the Proton donor in catalysis. Residue Glu-287 is part of the active site.

Belongs to the MurB family. The cofactor is FAD.

The protein resides in the cytoplasm. The enzyme catalyses UDP-N-acetyl-alpha-D-muramate + NADP(+) = UDP-N-acetyl-3-O-(1-carboxyvinyl)-alpha-D-glucosamine + NADPH + H(+). It participates in cell wall biogenesis; peptidoglycan biosynthesis. In terms of biological role, cell wall formation. The protein is UDP-N-acetylenolpyruvoylglucosamine reductase of Streptococcus pyogenes serotype M28 (strain MGAS6180).